We begin with the raw amino-acid sequence, 428 residues long: Tryptophan synthase beta chain (428 aa).

N6-(pyridoxal phosphate)lysine is present on K92.

This sequence belongs to the TrpB family. As to quaternary structure, tetramer of two alpha and two beta chains. Pyridoxal 5'-phosphate serves as cofactor.

It carries out the reaction (1S,2R)-1-C-(indol-3-yl)glycerol 3-phosphate + L-serine = D-glyceraldehyde 3-phosphate + L-tryptophan + H2O. The protein operates within amino-acid biosynthesis; L-tryptophan biosynthesis; L-tryptophan from chorismate: step 5/5. Its function is as follows. The beta subunit is responsible for the synthesis of L-tryptophan from indole and L-serine. This Leptothrix cholodnii (strain ATCC 51168 / LMG 8142 / SP-6) (Leptothrix discophora (strain SP-6)) protein is Tryptophan synthase beta chain.